The chain runs to 440 residues: Ribosomal protein uS12 methylthiotransferase RimO (440 aa).

The MTTase N-terminal domain maps to 8–118; that stretch reads PTVGFVSLGC…VMGIVHTHLP (111 aa). [4Fe-4S] cluster contacts are provided by C17, C53, C82, C149, C153, and C156. One can recognise a Radical SAM core domain in the interval 135-372; the sequence is LTPDHFAYLK…MQVQEDISAD (238 aa). Residues 375 to 440 enclose the TRAM domain; the sequence is AAKIDTVIQV…DHHDLYAQVV (66 aa).

This sequence belongs to the methylthiotransferase family. RimO subfamily. It depends on [4Fe-4S] cluster as a cofactor.

Its subcellular location is the cytoplasm. The enzyme catalyses L-aspartate(89)-[ribosomal protein uS12]-hydrogen + (sulfur carrier)-SH + AH2 + 2 S-adenosyl-L-methionine = 3-methylsulfanyl-L-aspartate(89)-[ribosomal protein uS12]-hydrogen + (sulfur carrier)-H + 5'-deoxyadenosine + L-methionine + A + S-adenosyl-L-homocysteine + 2 H(+). Its function is as follows. Catalyzes the methylthiolation of an aspartic acid residue of ribosomal protein uS12. The polypeptide is Ribosomal protein uS12 methylthiotransferase RimO (Dechloromonas aromatica (strain RCB)).